A 335-amino-acid chain; its full sequence is Ornithine carbamoyltransferase 2, catabolic (335 aa).

Residues 62–65, Q89, R113, and 140–143 each bind carbamoyl phosphate; these read STRT and HPTQ. L-ornithine contacts are provided by residues N172, D236, and 240–241; that span reads SM. Residues 277–278 and R322 each bind carbamoyl phosphate; that span reads CL.

This sequence belongs to the aspartate/ornithine carbamoyltransferase superfamily. OTCase family.

It localises to the cytoplasm. The enzyme catalyses carbamoyl phosphate + L-ornithine = L-citrulline + phosphate + H(+). Its pathway is amino-acid degradation; L-arginine degradation via ADI pathway; carbamoyl phosphate from L-arginine: step 2/2. Its function is as follows. Reversibly catalyzes the transfer of the carbamoyl group from carbamoyl phosphate (CP) to the N(epsilon) atom of ornithine (ORN) to produce L-citrulline. In Staphylococcus epidermidis (strain ATCC 12228 / FDA PCI 1200), this protein is Ornithine carbamoyltransferase 2, catabolic (arcB2).